The sequence spans 76 residues: Small ribosomal subunit protein bS18 (76 aa).

The protein belongs to the bacterial ribosomal protein bS18 family. As to quaternary structure, part of the 30S ribosomal subunit. Forms a tight heterodimer with protein bS6.

Its function is as follows. Binds as a heterodimer with protein bS6 to the central domain of the 16S rRNA, where it helps stabilize the platform of the 30S subunit. This chain is Small ribosomal subunit protein bS18, found in Xanthomonas euvesicatoria pv. vesicatoria (strain 85-10) (Xanthomonas campestris pv. vesicatoria).